A 448-amino-acid chain; its full sequence is Probable metal transport system membrane protein CPn_0347/CP_0413/CPj0347/CpB0354 (448 aa).

8 consecutive transmembrane segments (helical) span residues 15–35, 47–67, 69–89, 100–120, 144–164, 193–213, 233–253, and 270–290; these read FLAV…LLIS, ASYP…SLQA, IFWI…IIVF, SALC…ASYV, FLEA…LWWW, LIFI…VLIS, ILIL…YISV, and LPTG…CLLF.

The protein belongs to the ABC-3 integral membrane protein family.

The protein localises to the cell inner membrane. Part of an ATP-driven transport system CPn_0346/CPn_0347/CPn_0348/CPn_0349 for a metal. The polypeptide is Probable metal transport system membrane protein CPn_0347/CP_0413/CPj0347/CpB0354 (Chlamydia pneumoniae (Chlamydophila pneumoniae)).